The primary structure comprises 623 residues: Flap endonuclease 1 (623 aa).

An N-domain region spans residues 1–106 (MGIKGLTKFI…SELEKRGEKR (106 aa)). Asp34 contributes to the Mg(2+) binding site. Residues Arg47 and Arg72 each coordinate DNA. Mg(2+) contacts are provided by Asp88, Glu160, Glu162, Asp181, and Asp183. The segment at 124-267 (EIKKQSGRTV…KTAYNLIKEY (144 aa)) is I-domain. Glu160 provides a ligand contact to DNA. Positions 245 and 247 each coordinate DNA. Asp247 contributes to the Mg(2+) binding site. The interaction with PCNA stretch occupies residues 350 to 358 (TQRRLDNFF). The interval 368 to 517 (LVIEESQSQS…LSSNSTLHSC (150 aa)) is disordered. Composition is skewed to basic and acidic residues over residues 410–424 (TKVE…KDEE) and 466–482 (QKSD…KTEQ). Over residues 502 to 517 (AGSNTHLSSNSTLHSC) the composition is skewed to polar residues.

The protein belongs to the XPG/RAD2 endonuclease family. FEN1 subfamily. Interacts with PCNA. Three molecules of FEN1 bind to one PCNA trimer with each molecule binding to one PCNA monomer. PCNA stimulates the nuclease activity without altering cleavage specificity. Requires Mg(2+) as cofactor. In terms of processing, phosphorylated. Phosphorylation upon DNA damage induces relocalization to the nuclear plasma.

The protein localises to the nucleus. It is found in the nucleolus. Its subcellular location is the nucleoplasm. The protein resides in the mitochondrion. Structure-specific nuclease with 5'-flap endonuclease and 5'-3' exonuclease activities involved in DNA replication and repair. During DNA replication, cleaves the 5'-overhanging flap structure that is generated by displacement synthesis when DNA polymerase encounters the 5'-end of a downstream Okazaki fragment. It enters the flap from the 5'-end and then tracks to cleave the flap base, leaving a nick for ligation. Also involved in the long patch base excision repair (LP-BER) pathway, by cleaving within the apurinic/apyrimidinic (AP) site-terminated flap. Acts as a genome stabilization factor that prevents flaps from equilibrating into structures that lead to duplications and deletions. Also possesses 5'-3' exonuclease activity on nicked or gapped double-stranded DNA, and exhibits RNase H activity. Also involved in replication and repair of rDNA and in repairing mitochondrial DNA. The sequence is that of Flap endonuclease 1 from Plasmodium vivax (strain Salvador I).